Reading from the N-terminus, the 164-residue chain is MEFFFYSSSLATIVFTVCSIFSRNLMYSLLYLILSFVFTSCVFFSLGATFAAALEVIIYAGAIMVLFVFFIMMFNFKKSTLYAEKIFDKNNYYYINFLFLLCILIFPFFFILSYLYKEKIFYMVVSTKLVAIKLFSDYILVIELSSIVLLSALIIVSHIGKIRR.

A run of 5 helical transmembrane segments spans residues 1–21 (MEFF…CSIF), 30–50 (LYLI…GATF), 54–74 (LEVI…IMMF), 94–114 (YINF…ILSY), and 138–158 (YILV…IVSH).

Belongs to the complex I subunit 6 family. In terms of assembly, composed of 13 different subunits. Subunits NuoA, H, J, K, L, M, N constitute the membrane sector of the complex.

The protein localises to the cell membrane. The catalysed reaction is a quinone + NADH + 5 H(+)(in) = a quinol + NAD(+) + 4 H(+)(out). Its function is as follows. NDH-1 shuttles electrons from NADH, via FMN and iron-sulfur (Fe-S) centers, to quinones in the respiratory chain. Couples the redox reaction to proton translocation (for every two electrons transferred, four hydrogen ions are translocated across the cytoplasmic membrane), and thus conserves the redox energy in a proton gradient. This chain is NADH-quinone oxidoreductase subunit J (nuoJ), found in Buchnera aphidicola subsp. Baizongia pistaciae (strain Bp).